A 386-amino-acid chain; its full sequence is MVEATAQETDRPRFSFSIAAREGKARTGTIEMKRGVIRTPAFMPVGTAATVKALKPETVRATGADIILGNTYHLMLRPGAERIAKLGGLHSFMGWDRPILTDSGGYQVMSLSSLTKQSEEGVTFKSHLDGSRHMLSPERSIEIQHLLGSDIVMAFDECTPYPATPSRAASSMERSMRWAKRSRDAFDSRKEQAENAALFGIQQGSVFENLRQQSADALAEIGFDGYAVGGLAVGEGQDEMFRVLDFSVPMLPDDKPHYLMGVGKPDDIVGAVERGIDMFDCVLPTRSGRNGQAFTWDGPINIRNARFSEDLTPLDSECHCAVCQKWSRAYIHHLIRAGEILGAMLMTEHNIAFYQQLMQKIRDSISEGRFSQFAQDFRARYFARNS.

The active-site Proton acceptor is Asp-102. Substrate is bound by residues 102–106, Asp-156, Gln-203, and Gly-230; that span reads DSGGY. The tract at residues 261-267 is RNA binding; that stretch reads GVGKPDD. Asp-280 acts as the Nucleophile in catalysis. The tract at residues 285 to 289 is RNA binding; important for wobble base 34 recognition; it reads TRSGR. 4 residues coordinate Zn(2+): Cys-318, Cys-320, Cys-323, and His-349.

Belongs to the queuine tRNA-ribosyltransferase family. In terms of assembly, homodimer. Within each dimer, one monomer is responsible for RNA recognition and catalysis, while the other monomer binds to the replacement base PreQ1. It depends on Zn(2+) as a cofactor.

It carries out the reaction 7-aminomethyl-7-carbaguanine + guanosine(34) in tRNA = 7-aminomethyl-7-carbaguanosine(34) in tRNA + guanine. Its pathway is tRNA modification; tRNA-queuosine biosynthesis. Functionally, catalyzes the base-exchange of a guanine (G) residue with the queuine precursor 7-aminomethyl-7-deazaguanine (PreQ1) at position 34 (anticodon wobble position) in tRNAs with GU(N) anticodons (tRNA-Asp, -Asn, -His and -Tyr). Catalysis occurs through a double-displacement mechanism. The nucleophile active site attacks the C1' of nucleotide 34 to detach the guanine base from the RNA, forming a covalent enzyme-RNA intermediate. The proton acceptor active site deprotonates the incoming PreQ1, allowing a nucleophilic attack on the C1' of the ribose to form the product. After dissociation, two additional enzymatic reactions on the tRNA convert PreQ1 to queuine (Q), resulting in the hypermodified nucleoside queuosine (7-(((4,5-cis-dihydroxy-2-cyclopenten-1-yl)amino)methyl)-7-deazaguanosine). The sequence is that of Queuine tRNA-ribosyltransferase from Zymomonas mobilis subsp. mobilis (strain ATCC 31821 / ZM4 / CP4).